A 191-amino-acid polypeptide reads, in one-letter code: Transcription factor E (191 aa).

The region spanning 4 to 87 (RNKELLEIGR…YWHIETKRLP (84 aa)) is the HTH TFE/IIEalpha-type domain. The disordered stretch occupies residues 170–191 (APPKKEKKGKKSKKRSKKSKKK). Over residues 174–191 (KEKKGKKSKKRSKKSKKK) the composition is skewed to basic residues.

The protein belongs to the TFE family. In terms of assembly, monomer. Interaction with RNA polymerase subunits RpoF and RpoE is necessary for Tfe stimulatory transcription activity. Able to interact with Tbp and RNA polymerase in the absence of DNA promoter. Interacts both with the preinitiation and elongation complexes.

Functionally, transcription factor that plays a role in the activation of archaeal genes transcribed by RNA polymerase. Facilitates transcription initiation by enhancing TATA-box recognition by TATA-box-binding protein (Tbp), and transcription factor B (Tfb) and RNA polymerase recruitment. Not absolutely required for transcription in vitro, but particularly important in cases where Tbp or Tfb function is not optimal. It dynamically alters the nucleic acid-binding properties of RNA polymerases by stabilizing the initiation complex and destabilizing elongation complexes. Seems to translocate with the RNA polymerase following initiation and acts by binding to the non template strand of the transcription bubble in elongation complexes. The protein is Transcription factor E of Pyrococcus horikoshii (strain ATCC 700860 / DSM 12428 / JCM 9974 / NBRC 100139 / OT-3).